Reading from the N-terminus, the 204-residue chain is Recombination protein RecR (204 aa).

Residues 58 to 75 form a C4-type zinc finger; it reads CSICQNVTDRDADPCRIC. The Toprim domain maps to 83-181; that stretch reads SVICVVESPV…MVTKIARGIP (99 aa).

It belongs to the RecR family.

In terms of biological role, may play a role in DNA repair. It seems to be involved in an RecBC-independent recombinational process of DNA repair. It may act with RecF and RecO. The protein is Recombination protein RecR of Chlorobium phaeovibrioides (strain DSM 265 / 1930) (Prosthecochloris vibrioformis (strain DSM 265)).